We begin with the raw amino-acid sequence, 178 residues long: Conodipine-P2 (178 aa).

An N-terminal signal peptide occupies residues 1–24 (MKLLAPVLWAMAALGVTWLVAVDS). 4-hydroxyproline is present on residues Pro38, Pro42, and Pro49. His54 is an active-site residue. Positions 98–130 (KREVTSHRATSIAHSRLWKTALDQKSFLNRKAR) are cleaved as a propeptide — interchain peptide. Gln131 bears the Pyrrolidone carboxylic acid mark. Residue Pro137 is modified to 4-hydroxyproline.

It belongs to the phospholipase A2 family. Group IX subfamily. As to quaternary structure, heterodimer of an alpha and a beta chain; probably disulfide-linked. The cofactor is Ca(2+). As to expression, expressed by the venom duct.

The protein localises to the secreted. The catalysed reaction is a 1,2-diacyl-sn-glycero-3-phosphocholine + H2O = a 1-acyl-sn-glycero-3-phosphocholine + a fatty acid + H(+). Functionally, catalyzes the calcium-dependent hydrolysis of the 2-acyl groups in 3-sn-phosphoglycerides. The protein is Conodipine-P2 of Conus purpurascens (Purple cone).